A 98-amino-acid polypeptide reads, in one-letter code: Small ribosomal subunit protein bS18 (98 aa).

It belongs to the bacterial ribosomal protein bS18 family. As to quaternary structure, part of the 30S ribosomal subunit. Forms a tight heterodimer with protein bS6.

Functionally, binds as a heterodimer with protein bS6 to the central domain of the 16S rRNA, where it helps stabilize the platform of the 30S subunit. This is Small ribosomal subunit protein bS18 from Flavobacterium johnsoniae (strain ATCC 17061 / DSM 2064 / JCM 8514 / BCRC 14874 / CCUG 350202 / NBRC 14942 / NCIMB 11054 / UW101) (Cytophaga johnsonae).